Here is a 120-residue protein sequence, read N- to C-terminus: Large ribosomal subunit protein bL17 (120 aa).

The protein belongs to the bacterial ribosomal protein bL17 family. In terms of assembly, part of the 50S ribosomal subunit. Contacts protein L32.

This Bacillus velezensis (strain DSM 23117 / BGSC 10A6 / LMG 26770 / FZB42) (Bacillus amyloliquefaciens subsp. plantarum) protein is Large ribosomal subunit protein bL17.